Consider the following 146-residue polypeptide: ATP synthase epsilon chain 2 (146 aa).

Belongs to the ATPase epsilon chain family. F-type ATPases have 2 components, CF(1) - the catalytic core - and CF(0) - the membrane proton channel. CF(1) has five subunits: alpha(3), beta(3), gamma(1), delta(1), epsilon(1). CF(0) has three main subunits: a, b and c.

It is found in the cell inner membrane. Its function is as follows. Produces ATP from ADP in the presence of a proton gradient across the membrane. The polypeptide is ATP synthase epsilon chain 2 (Cereibacter sphaeroides (strain ATCC 17023 / DSM 158 / JCM 6121 / CCUG 31486 / LMG 2827 / NBRC 12203 / NCIMB 8253 / ATH 2.4.1.) (Rhodobacter sphaeroides)).